Reading from the N-terminus, the 451-residue chain is Prenyltransferase asqH1 (451 aa).

A disordered region spans residues 14-37 (AEDQSTRKVHWGQEGSGQSPEARP). Position 120 (E120) interacts with L-tryptophan. 5 residues coordinate substrate: R137, R274, K276, Y278, and Y373.

It belongs to the tryptophan dimethylallyltransferase family.

It catalyses the reaction quinolinone B + dimethylallyl diphosphate = peniprequinolone + diphosphate. It participates in secondary metabolite biosynthesis. Its pathway is alkaloid biosynthesis. It functions in the pathway mycotoxin biosynthesis. Its function is as follows. Prenyltransferase; part of the gene cluster that mediates the biosynthesis of the aspoquinolone mycotoxins. Within the pathway, the prenyltransferase asqH1 catalyzes the canonical Friedel-Crafts alkylation of quinolinone B with dimethylallyl cation to yield dimethylallyl quinolone. The first step of the pathway is catalyzed by the nonribosomal peptide synthetase asqK that condenses anthranilic acid and O-methyl-L-tyrosine to produce 4'-methoxycyclopeptin. 4'-methoxycyclopeptin is then converted to 4'-methoxydehydrocyclopeptin by the ketoglutarate-dependent dioxygenase asqJ. AsqJ also converts its first product 4'-methoxydehydrocyclopeptin to 4'-methoxycyclopenin. The following conversion of 4'-methoxycyclopenin into 4'-methoxyviridicatin is catalyzed by the cyclopenase asqI. 4'-methoxyviridicatin is the precursor of quinolone natural products, and is further converted to quinolinone B. The prenyltransferase asqH1 then catalyzes the canonical Friedel-Crafts alkylation of quinolinone B with dimethylallyl cation to yield dimethylallyl quinolone, which is subjected to FAD-dependent dehydrogenation by the FAD-linked oxidoreductase asqF to yield conjugated aryl diene. The delta(3') double bond then serves as the site of the second alkylation with DMAPP catalyzed by the prenyltransferase asqH2 to yield a carbenium ion intermediate, which can be attacked by H(2)O to yield a styrenyl quinolone containing a C3'-hydroxyprenyl chain. The FAD-dependent monooxygenase asqG performs epoxidation of the terminal C7'-C8' olefin. Finally, after dehydratation of the epoxide at C3 by asqC, the quinolone epoxide rearrangement protein asqO catalyzes an enzymatic 3-exo-tet cyclization to yield the cyclopropyl-THF ring system in aspoquinolone. This Emericella nidulans (strain FGSC A4 / ATCC 38163 / CBS 112.46 / NRRL 194 / M139) (Aspergillus nidulans) protein is Prenyltransferase asqH1.